The chain runs to 378 residues: Putative F-box/kelch-repeat protein At3g43710 (378 aa).

One can recognise an F-box domain in the interval 23-69; the sequence is TFGIEMLPDDLVLSCLARVPRMYYPILSLVSKRFRSFLTSTELYQTR. Kelch repeat units lie at residues 130-176, 178-227, and 262-308; these read NIYV…VLDG, IYVA…GYDG, and SQCV…VPTK.

In Arabidopsis thaliana (Mouse-ear cress), this protein is Putative F-box/kelch-repeat protein At3g43710.